A 159-amino-acid chain; its full sequence is Bacterioferritin (159 aa).

The 145-residue stretch at 1 to 145 (MQGDPEVLRL…TQLELMDKLG (145 aa)) folds into the Ferritin-like diiron domain. Glutamate 51 lines the Fe cation pocket. Methionine 52 contacts heme b. Positions 54, 94, 127, and 130 each coordinate Fe cation.

This sequence belongs to the bacterioferritin family. As to quaternary structure, homooligomer of 24 subunits, arranged as 12 dimers, that are packed together to form an approximately spherical molecule with a central cavity, in which large amounts of iron can be deposited. Requires heme b as cofactor.

The enzyme catalyses 4 Fe(2+) + O2 + 4 H(+) = 4 Fe(3+) + 2 H2O. The catalysed reaction is Fe(2+)(in) = Fe(2+)(out). In terms of biological role, iron-storage protein, whose ferroxidase center binds Fe(2+), oxidizes it using dioxygen to Fe(3+), and participates in the subsequent Fe(3+) oxide mineral core formation within the central cavity of the BFR protein shell. In Mycobacterium avium, this protein is Bacterioferritin (bfr).